Reading from the N-terminus, the 772-residue chain is MAEAHQAVAFQFTVTPEGVDFRLSREALKHIYLSGINSWKKRLIRIKNGILRGVYPGSPTSWLVVASATAGSSYYNVDISMGLVNHIQRCLPERYGPYWTPQTRALLSMAVVSTGVWMIGIFFFRQTLKLLLSYHGWMFEMHGQSSRVTKVWAICVRLLSSRRPMLYSFQTSLPKLPVPSVPATIHRYLESVQHLLDDEEYSRKEMLAKEFQEKTAPRLQKYLVLKSWWATNYVSDWWEEYVYLRGRTPLMVNSNYYVMDLVLMRSTDVQAARLGNAVHAMIMYRRKLDREDIKPVMALGIVPMCSYQMERMFNTTRIPGKDTDTLQHLTDSRHVAVYHKGRFFKVWLYEGSRLLKPCELELQFQRILDDPSPPQPGEEKLAALTAGGRVEWAQARQAFFSSGKNKFALDAIERAAFFVALDEESHHYDPEDEASLSLYGKALLHGNCYNRWFDKSFTLIAFKNGQLGLNTEHAWADAPIIGHLWEFVLGTDTFHLGYTETGHCLGKPNPMLAPPQRLQWDIPEQCQAVIESSYQVAKALADDVELYCFQFLPFGKGLIKKCRTSPDAFVQIALQLAYFRDRGKFCLTYEASMTRMFREGRTETVRSCTRESTAFVQAMVEGRRVKADLQDLFRKAAQKHQNMYRLAMTGAGIDRHLFCLYVVSKYLGVSSPFLAEVLSEPWRLSTSQIAQFQIRMFDPNKYPNHLGAGGGFGPVADDGYGVSYMIAGENTIFFHVSSKFSSSETNAQRFGNHIRQALLDLADLFQVPKTDS.

Residues 1–47 lie on the Cytoplasmic side of the membrane; it reads MAEAHQAVAFQFTVTPEGVDFRLSREALKHIYLSGINSWKKRLIRIK. A helical transmembrane segment spans residues 48-73; that stretch reads NGILRGVYPGSPTSWLVVASATAGSS. The Mitochondrial intermembrane segment spans residues 74–102; sequence YYNVDISMGLVNHIQRCLPERYGPYWTPQ. A helical transmembrane segment spans residues 103–122; that stretch reads TRALLSMAVVSTGVWMIGIF. At 123–772 the chain is on the cytoplasmic side; the sequence is FFRQTLKLLL…DLFQVPKTDS (650 aa). Catalysis depends on His-473, which acts as the Proton acceptor. 555–567 serves as a coordination point for CoA; it reads GKGLIKKCRTSPD. Residues Tyr-589 and Thr-602 each coordinate (R)-carnitine.

This sequence belongs to the carnitine/choline acetyltransferase family.

It is found in the mitochondrion outer membrane. The enzyme catalyses (R)-carnitine + hexadecanoyl-CoA = O-hexadecanoyl-(R)-carnitine + CoA. It participates in lipid metabolism; fatty acid beta-oxidation. Its function is as follows. Catalyzes the transfer of the acyl group of long-chain fatty acid-CoA conjugates onto carnitine, an essential step for the mitochondrial uptake of long-chain fatty acids and their subsequent beta-oxidation in the mitochondrion. This is Carnitine O-palmitoyltransferase 1, muscle isoform (CPT1B) from Sus scrofa (Pig).